We begin with the raw amino-acid sequence, 335 residues long: MAVYDQSGDRNRTQIDTSRKRKSRSRGDGTTVAERLKRWKEYNETVEEVSTKKRKVPAKGSKKGCMKGKGGPENSRCSFRGVRQRIWGKWVAEIREPNRGSRLWLGTFPTAQEAASAYDEAAKAMYGPLARLNFPRSDASEVTSTSSQSEVCTVETPGCVHVKTEDPDCESKPFSGGVEPMYCLENGAEEMKRGVKADKHWLSEFEHNYWSDILKEKEKQKEQGIVETCQQQQQDSLSVADYGWPNDVDQSHLDSSDMFDVDELLRDLNGDDVFAGLNQDRYPGNSVANGSYRPESQQSGFDPLQSLNYGIPPFQLEGKDGNGFFDDLSYLDLEN.

Disordered stretches follow at residues 1 to 32 (MAVY…GTTV) and 50 to 74 (STKK…GPEN). The Nuclear localization signal signature appears at 19–55 (RKRKSRSRGDGTTVAERLKRWKEYNETVEEVSTKKRK). Basic residues predominate over residues 52 to 66 (KKRKVPAKGSKKGCM). The AP2/ERF DNA-binding region spans 78-135 (SFRGVRQRIWGKWVAEIREPNRGSRLWLGTFPTAQEAASAYDEAAKAMYGPLARLNFP). The interval 279 to 304 (QDRYPGNSVANGSYRPESQQSGFDPL) is disordered. The span at 286–304 (SVANGSYRPESQQSGFDPL) shows a compositional bias: polar residues.

This sequence belongs to the AP2/ERF transcription factor family. ERF subfamily. Interacts with MED25. Binds to DPB3-1 in the nucleus during heat-stress. In terms of processing, ubiquitinated by DRIP1 and DRIP2. Ubiquitination probably leads to its subsequent degradation, thus negatively regulating response to drought. In terms of tissue distribution, expressed preferentially in roots and stems, and at a lower level in leaves.

Its subcellular location is the nucleus. In terms of biological role, transcriptional activator that binds specifically to the DNA sequence 5'-[AG]CCGAC-3'. Binding to the C-repeat/DRE element mediates high salinity- and dehydration-inducible transcription. Promotes the expression of heat stress-inducible genes by contributing to the formation of a heat stress-specific transcriptional complex with NF-Y subunits (e.g. DPB3-1, NF-YA2 and NF-YB3) at the promoter of target genes, thus promoting heat tolerance. This Arabidopsis thaliana (Mouse-ear cress) protein is Dehydration-responsive element-binding protein 2A.